Consider the following 1312-residue polypeptide: Probable histone-lysine N-methyltransferase lin-59 (1312 aa).

Polar residues-rich tracts occupy residues 1 to 11 (MHGAGEQQQRY) and 25 to 36 (STSSHQYQQQGA). Disordered regions lie at residues 1–41 (MHGA…QMHQ), 54–81 (TTTSAAASTSSSGGSNSSGGSGGHRQQG), 154–223 (QPSG…KPVD), 312–435 (EESK…PPPV), and 524–556 (KDNIKKEVKEESTPPPTKLRGRLPSRRTREPSE). Over residues 54–68 (TTTSAAASTSSSGGS) the composition is skewed to low complexity. Gly residues predominate over residues 69-78 (NSSGGSGGHR). The span at 160 to 176 (PMSSNAPATTSSATPDS) shows a compositional bias: low complexity. Residues 200-210 (DHDDEEDDDGP) are compositionally biased toward acidic residues. Residues 312-321 (EESKKKKDME) show a composition bias toward basic and acidic residues. Positions 344-367 (ATRSTNSPDVTTSNLPEEPSTSTM) are enriched in polar residues. Basic and acidic residues predominate over residues 371–382 (KENEDVEKVEGK). Over residues 383-394 (RRGRKPKKRRGF) the composition is skewed to basic residues. 2 stretches are compositionally biased toward basic and acidic residues: residues 395–419 (HKESFEDLESDAKKSKAEQHEDHLP) and 524–535 (KDNIKKEVKEES). Residues 590 to 635 (APSLTCGCTKGACTSDMDCLNRALRVQCSSDCSVPYCSNRRFWKED) form the AWS domain. Positions 638 to 750 (NKLCVSNGPR…PNAEITVDKS (113 aa)) constitute an SET domain. Residues 913–934 (DNAPRARALSTSCPSPVPSKRG) form a disordered region. The PHD-type zinc-finger motif lies at 967–1027 (AVRCICGALD…EYICDFCTNK (61 aa)). The BAH domain maps to 1100 to 1223 (NKYRFPKAAT…KTQRVFEKVP (124 aa)). Positions 1248 to 1295 (RDFRPYDPSNPSPKPPKTSSIPSTSSIDPPQSSSDGLPEVDTKKLSKR) are disordered. Residues 1264–1281 (KTSSIPSTSSIDPPQSSS) are compositionally biased toward low complexity.

Belongs to the class V-like SAM-binding methyltransferase superfamily. Histone-lysine methyltransferase family. SET2 subfamily. In terms of tissue distribution, widely expressed throughout embryonic development and into adulthood.

The protein resides in the nucleus. It carries out the reaction L-lysyl-[histone] + S-adenosyl-L-methionine = N(6)-methyl-L-lysyl-[histone] + S-adenosyl-L-homocysteine + H(+). Probable histone methyltransferase. Essential protein required to maintain expression of homeotic genes egl-5 and mab-5. May play an analogous role to the trithorax Group (trxG) proteins. TrxG proteins form multiprotein complexes that are required to maintain the transcriptionally active state of homeotic genes throughout development. May act via a modification of chromatin. The polypeptide is Probable histone-lysine N-methyltransferase lin-59 (lin-59) (Caenorhabditis elegans).